We begin with the raw amino-acid sequence, 375 residues long: Aldehyde reductase FrzD (375 aa).

FMN contacts are provided by A61, Q103, and H171. The active-site Proton donor is the Y176. Positions 223, 294, and 319 each coordinate FMN.

Belongs to the NADH:flavin oxidoreductase/NADH oxidase family. FMN serves as cofactor.

It catalyses the reaction (1S,4S)-4-[(4-hydroxyphenyl)methyl]-2,5-diazaspiro[bicyclo[3.2.1]octane-6,1'-cyclohexane]-2',5'-dien-4'-one + 2 NADPH + 2 H(+) = (1S,4S)-4-[(4-hydroxyphenyl)methyl]-2,5-diazaspiro[bicyclo[3.2.1]octane-6,1'-cyclohexan]-4'-one + 2 NADP(+). The protein operates within alkaloid biosynthesis; ergot alkaloid biosynthesis. In terms of biological role, aldehyde reductase; part of the gene cluster that mediates the biosynthesis of the alkaloid (-)-FR901483, a potent immunosuppressant that shows efficacy in animal models and a probable inhibitor of purine nucleotide biosynthesis by targeting phosphoribosylpyrophosphate amidotransferase (PPAT). Within the pathway, FrzD reduces the dienone portion of the pathway intermediates to cyclohexanone. The biosynthesis of (-)-FR901483 starts with the condensation of two L-tyrosines to yield (S,S)-dityrosyl-piperazine. This process occurs in 3 steps with the non-canonical nonribosomal peptide synthetase FrzA catalyzing the reduction of L-tyrosine into L-tyrosinal, the spontaneous condensation of 2 L-tyrosinal units, and the subsequent reduction by the NmrA-like family domain-containing oxidoreductase FrzB. The cytochrome P450 monooxygenase FrzC then performs coupling between N10 and C1' to morph the piperazine into a 1,4-diazabicyclo[3.2.1]octane spiro-fused to a 2,5-cyclohexadienone. The dienone portion is further reduced to cyclohexanone by the flavin-dependent reductase FrzD. The methyltranserases (MTs) FrzE and FrzF are then involved in the methylation at the C10' amine and the C4 phenolic oxygen, respectively. The order of the two MTs appear to be interchangeable. Cleavage of the C9-N10' bond by the dioxygenase FrzG then leads to formation of a conjugated iminium. In addition to the oxidation of C9, an additional dehydrogenation between C7 and C8 can occur to give a likely shunt product. The next biosynthetic step is the intramolecular aldol condensation catalyzed by the newly identified aldolase FrzH to yield an aza-tricyclic product with the formation of a C9-C3' bond. The short-chain dehydrogenase/reductase FrzI then produces dephospho-(-)-FR901483 that is phosphorylated at C4'-OH into (-)-FR901483 by the phosphotransferase FrzJ. The only unassigned enzyme in the cluster is the second cytochrome P450 monooxygenase FrzL. This Cladobotryum sp protein is Aldehyde reductase FrzD.